Consider the following 135-residue polypeptide: Putative pre-16S rRNA nuclease (135 aa).

The protein belongs to the YqgF nuclease family.

Its subcellular location is the cytoplasm. In terms of biological role, could be a nuclease involved in processing of the 5'-end of pre-16S rRNA. In Thermus thermophilus (strain ATCC 27634 / DSM 579 / HB8), this protein is Putative pre-16S rRNA nuclease.